Here is a 357-residue protein sequence, read N- to C-terminus: Holliday junction branch migration complex subunit RuvB (357 aa).

The segment at 4-195 (TDKLAAKAVS…FGIVARLEFY (192 aa)) is large ATPase domain (RuvB-L). ATP contacts are provided by residues leucine 34, arginine 35, glycine 76, lysine 79, threonine 80, threonine 81, 142 to 144 (EDY), arginine 185, tyrosine 195, and arginine 232. Residue threonine 80 participates in Mg(2+) binding. Positions 196-266 (TPAELAKIVT…VADAALAMLD (71 aa)) are small ATPAse domain (RuvB-S). Positions 269 to 357 (AVGFDLMDRK…PVRDLWDDNQ (89 aa)) are head domain (RuvB-H). The DNA site is built by arginine 305, arginine 324, and arginine 329.

The protein belongs to the RuvB family. In terms of assembly, homohexamer. Forms an RuvA(8)-RuvB(12)-Holliday junction (HJ) complex. HJ DNA is sandwiched between 2 RuvA tetramers; dsDNA enters through RuvA and exits via RuvB. An RuvB hexamer assembles on each DNA strand where it exits the tetramer. Each RuvB hexamer is contacted by two RuvA subunits (via domain III) on 2 adjacent RuvB subunits; this complex drives branch migration. In the full resolvosome a probable DNA-RuvA(4)-RuvB(12)-RuvC(2) complex forms which resolves the HJ.

The protein localises to the cytoplasm. The catalysed reaction is ATP + H2O = ADP + phosphate + H(+). In terms of biological role, the RuvA-RuvB-RuvC complex processes Holliday junction (HJ) DNA during genetic recombination and DNA repair, while the RuvA-RuvB complex plays an important role in the rescue of blocked DNA replication forks via replication fork reversal (RFR). RuvA specifically binds to HJ cruciform DNA, conferring on it an open structure. The RuvB hexamer acts as an ATP-dependent pump, pulling dsDNA into and through the RuvAB complex. RuvB forms 2 homohexamers on either side of HJ DNA bound by 1 or 2 RuvA tetramers; 4 subunits per hexamer contact DNA at a time. Coordinated motions by a converter formed by DNA-disengaged RuvB subunits stimulates ATP hydrolysis and nucleotide exchange. Immobilization of the converter enables RuvB to convert the ATP-contained energy into a lever motion, pulling 2 nucleotides of DNA out of the RuvA tetramer per ATP hydrolyzed, thus driving DNA branch migration. The RuvB motors rotate together with the DNA substrate, which together with the progressing nucleotide cycle form the mechanistic basis for DNA recombination by continuous HJ branch migration. Branch migration allows RuvC to scan DNA until it finds its consensus sequence, where it cleaves and resolves cruciform DNA. This is Holliday junction branch migration complex subunit RuvB from Ralstonia pickettii (strain 12J).